The following is a 335-amino-acid chain: Tryptophan--tRNA ligase (335 aa).

ATP contacts are provided by residues 13-15 and 21-22; these read QPS and GN. A 'HIGH' region motif is present at residues 14–22; sequence PSGNLTIGN. Residue Asp136 participates in L-tryptophan binding. Residues 148–150, Ile187, and 196–200 each bind ATP; these read GQD and KMSKS. Positions 196–200 match the 'KMSKS' region motif; the sequence is KMSKS.

This sequence belongs to the class-I aminoacyl-tRNA synthetase family. Homodimer.

Its subcellular location is the cytoplasm. It carries out the reaction tRNA(Trp) + L-tryptophan + ATP = L-tryptophyl-tRNA(Trp) + AMP + diphosphate + H(+). Functionally, catalyzes the attachment of tryptophan to tRNA(Trp). This chain is Tryptophan--tRNA ligase, found in Buchnera aphidicola subsp. Acyrthosiphon pisum (strain APS) (Acyrthosiphon pisum symbiotic bacterium).